A 363-amino-acid chain; its full sequence is Ribosomal RNA large subunit methyltransferase M (363 aa).

Residues S194, 227–230 (CPGG), D246, D266, and D284 contribute to the S-adenosyl-L-methionine site. Catalysis depends on K313, which acts as the Proton acceptor.

Belongs to the class I-like SAM-binding methyltransferase superfamily. RNA methyltransferase RlmE family. RlmM subfamily. Monomer.

The protein localises to the cytoplasm. The catalysed reaction is cytidine(2498) in 23S rRNA + S-adenosyl-L-methionine = 2'-O-methylcytidine(2498) in 23S rRNA + S-adenosyl-L-homocysteine + H(+). Functionally, catalyzes the 2'-O-methylation at nucleotide C2498 in 23S rRNA. The protein is Ribosomal RNA large subunit methyltransferase M of Mannheimia succiniciproducens (strain KCTC 0769BP / MBEL55E).